A 536-amino-acid chain; its full sequence is Proto-oncogene tyrosine-protein kinase Src (536 aa).

The disordered stretch occupies residues 1–53 (MGSNKSKPKDASQRRRSLEPAENVHGAGGGAFPASQTPSKPASADGHRGPSAA). Gly2 is lipidated: N-myristoyl glycine. Over residues 7-19 (KPKDASQRRRSLE) the composition is skewed to basic and acidic residues. Ser17 carries the phosphoserine modification. Residue Ser75 is modified to Phosphoserine; by CDK5. An SH3 domain is found at 84 to 145 (GGVTTFVALY…PSNYVAPSDS (62 aa)). The SH2 domain occupies 151–248 (WYFGKITRRE…GLCHRLTTVC (98 aa)). Tyr187 carries the post-translational modification Phosphotyrosine. In terms of domain architecture, Protein kinase spans 270–523 (LRLEVKLGQG…YLQAFLEDYF (254 aa)). Residues 276 to 284 (LGQGCFGEV) and Lys298 contribute to the ATP site. Asp389 functions as the Proton acceptor in the catalytic mechanism. At Tyr419 the chain carries Phosphotyrosine; by autocatalysis. Tyr419 is modified (phosphotyrosine; by FAK2). Position 530 is a phosphotyrosine; by CSK (Tyr530).

This sequence belongs to the protein kinase superfamily. Tyr protein kinase family. SRC subfamily. Part of a complex comprised of PTPRA, BCAR1, BCAR3 (via SH2 domain) and SRC; the formation of the complex is dependent on integrin mediated-tyrosine phosphorylation of PTPRA. Interacts with DDEF1/ASAP1; via the SH3 domain. Interacts with CCPG1. Identified in a complex containing FGFR4, NCAM1, CDH2, PLCG1, FRS2, SRC, SHC1, GAP43 and CTTN. Interacts with ERBB2, STAT1 and PNN. Interacts with DDR1, DDR2 and DAB2. Interacts with CDCP1, TGFB1I1 and TOM1L2. Interacts with the cytoplasmic domain of MUC1, phosphorylates it and increases binding of MUC1 with beta-catenin. Interacts with RALGPS1; via the SH3 domain. Interacts with CAV2 (tyrosine phosphorylated form). Interacts (via the SH3 domain and the protein kinase domain) with ARRB1; the interaction is independent of the phosphorylation state of SRC C-terminus. Interacts with ARRB1 and ARRB2. Interacts with SRCIN1. Interacts with NDFIP2 and more weakly with NDFIP1. Interacts with PIK3CA and/or PIK3C2B, PTK2/FAK1 and ESR1 (dimethylated on arginine). Interacts with FASLG. Interacts (via SH2 domain) with the 'Tyr-402' phosphorylated form of PTK2B/PYK2. Interacts (via SH2 domain) with FLT3 (tyrosine phosphorylated). Interacts with PDGFRA (tyrosine phosphorylated). Interacts with CSF1R. Interacts (via SH2 and SH3 domain) with TNK2. Interacts (via protein kinase domain) with the tyrosine phosphorylated form of RUNX3 (via runt domain). Interacts with TRAF3 (via RING-type zinc finger domain). Interacts with RIGI, MAVS and TBK1. Interacts (via SH2 domain) with RACK1; the interaction is enhanced by tyrosine phosphorylation of RACK1 and inhibits SRC activity. Interacts with EPHB1; activates the MAPK/ERK cascade to regulate cell migration. Interacts with FCAMR. Interacts (via SH2 domain) with the 'Tyr-9' phosphorylated form of PDPK1. Interacts with AMOTL2; this interaction regulates the translocation of phosphorylated SRC to peripheral cell-matrix adhesion sites. Interacts with TRAP1. Interacts with CBLC; the interaction is enhanced when SRC is phosphorylated at Tyr-419. Interacts with ARHGEF5. Interacts (via cytoplasmic domain) with CEACAM1 (via SH2 domain); this interaction is regulated by trans-homophilic cell adhesion. Interacts with MPP2. Interacts with PRR7. Interacts (via kinase domain and to a lesser extent the SH2 domain) directly with PDLIM4; this interaction results in PTPN13-mediated dephosphorylation of this protein leading to its inactivation. Interacts with P85 (PIK3R1 or PIK3R2). Interacts with HNRNPA2B1. Interacts with IL6ST/gp130. Interacts (via SH3 domain) with PELP1 in the presence of 17-beta-estradiol. Interacts with AMBRA1. As to quaternary structure, (Microbial infection) Interacts with HEV ORF3 protein; via the SH3 domain. In terms of assembly, (Microbial infection) Interacts (via SH2 domain) with HCV non-structural protein 5A (via N-terminus). Post-translationally, myristoylated at Gly-2, and this is essential for targeting to membranes. In terms of processing, dephosphorylated at Tyr-530 by PTPRJ. Phosphorylated on Tyr-530 by c-Src kinase (CSK). The phosphorylated form is termed pp60c-src. Dephosphorylated by PTPRJ at Tyr-419. Normally maintained in an inactive conformation with the SH2 domain engaged with Tyr-530, the SH3 domain engaged with the SH2-kinase linker, and Tyr-419 dephosphorylated. Dephosphorylation of Tyr-530 as a result of protein tyrosine phosphatase (PTP) action disrupts the intramolecular interaction between the SH2 domain and Tyr-530, Tyr-419 can then become autophosphorylated, resulting in SRC activation. Phosphorylation of Tyr-530 by CSK allows this interaction to reform, resulting in SRC inactivation. CDK5-mediated phosphorylation at Ser-75 targets SRC to ubiquitin-dependent degradation and thus leads to cytoskeletal reorganization. Phosphorylated by PTK2/FAK1; this enhances kinase activity. Phosphorylated by PTK2B/PYK2; this enhances kinase activity. Upon activation of IL6ST by IL6, Tyr-419 is phosphorylated and Tyr-530 dephosphorylated. Displays reduced levels of autophosphorylation at Tyr-419 compared to isoforms 2 and 3. Post-translationally, displays enhanced levels of autophosphorylation at Tyr-419 compared to isoform 1. In terms of processing, displays enhanced levels of autophosphorylation at Tyr-419 compared to isoform 1. Shows reduced phosphorylation at Tyr-527 compared to isoforms 1 and 2. S-nitrosylation is important for activation of its kinase activity. Post-translationally, ubiquitinated in response to CDK5-mediated phosphorylation. Ubiquitination mediated by CBLC requires SRC autophosphorylation at Tyr-419 and may lead to lysosomal degradation. Expressed ubiquitously. Expressed in the skin (at protein level). Platelets, neurons and osteoclasts express 5-fold to 200-fold higher levels than most other tissues. As to expression, expressed in spleen and liver. In terms of tissue distribution, expressed in brain.

It localises to the cell membrane. The protein localises to the mitochondrion inner membrane. It is found in the nucleus. Its subcellular location is the cytoplasm. The protein resides in the cytoskeleton. It localises to the perinuclear region. The protein localises to the cell junction. It is found in the focal adhesion. It catalyses the reaction L-tyrosyl-[protein] + ATP = O-phospho-L-tyrosyl-[protein] + ADP + H(+). With respect to regulation, phosphorylation by CSK at Tyr-530 inhibits kinase activity. Inhibitory phosphorylation at Tyr-530 is enhanced by heme. Further phosphorylation by CDK1 partially reactivates CSK-inactivated SRC and facilitates complete reactivation by protein tyrosine phosphatase PTPRC. Integrin engagement stimulates kinase activity. Phosphorylation by PTK2/FAK1 enhances kinase activity. Butein and pseudosubstrate-based peptide inhibitors like CIYKYYF act as inhibitors. Phosphorylation at Tyr-419 increases kinase activity. Its function is as follows. Non-receptor protein tyrosine kinase which is activated following engagement of many different classes of cellular receptors including immune response receptors, integrins and other adhesion receptors, receptor protein tyrosine kinases, G protein-coupled receptors as well as cytokine receptors. Participates in signaling pathways that control a diverse spectrum of biological activities including gene transcription, immune response, cell adhesion, cell cycle progression, apoptosis, migration, and transformation. Due to functional redundancy between members of the SRC kinase family, identification of the specific role of each SRC kinase is very difficult. SRC appears to be one of the primary kinases activated following engagement of receptors and plays a role in the activation of other protein tyrosine kinase (PTK) families. Receptor clustering or dimerization leads to recruitment of SRC to the receptor complexes where it phosphorylates the tyrosine residues within the receptor cytoplasmic domains. Plays an important role in the regulation of cytoskeletal organization through phosphorylation of specific substrates such as AFAP1. Phosphorylation of AFAP1 allows the SRC SH2 domain to bind AFAP1 and to localize to actin filaments. Cytoskeletal reorganization is also controlled through the phosphorylation of cortactin (CTTN). When cells adhere via focal adhesions to the extracellular matrix, signals are transmitted by integrins into the cell resulting in tyrosine phosphorylation of a number of focal adhesion proteins, including PTK2/FAK1 and paxillin (PXN). In addition to phosphorylating focal adhesion proteins, SRC is also active at the sites of cell-cell contact adherens junctions and phosphorylates substrates such as beta-catenin (CTNNB1), delta-catenin (CTNND1), and plakoglobin (JUP). Another type of cell-cell junction, the gap junction, is also a target for SRC, which phosphorylates connexin-43 (GJA1). SRC is implicated in regulation of pre-mRNA-processing and phosphorylates RNA-binding proteins such as KHDRBS1. Phosphorylates PKP3 at 'Tyr-195' in response to reactive oxygen species, which may cause the release of PKP3 from desmosome cell junctions into the cytoplasm. Also plays a role in PDGF-mediated tyrosine phosphorylation of both STAT1 and STAT3, leading to increased DNA binding activity of these transcription factors. Involved in the RAS pathway through phosphorylation of RASA1 and RASGRF1. Plays a role in EGF-mediated calcium-activated chloride channel activation. Required for epidermal growth factor receptor (EGFR) internalization through phosphorylation of clathrin heavy chain (CLTC and CLTCL1) at 'Tyr-1477'. Involved in beta-arrestin (ARRB1 and ARRB2) desensitization through phosphorylation and activation of GRK2, leading to beta-arrestin phosphorylation and internalization. Has a critical role in the stimulation of the CDK20/MAPK3 mitogen-activated protein kinase cascade by epidermal growth factor. Might be involved not only in mediating the transduction of mitogenic signals at the level of the plasma membrane but also in controlling progression through the cell cycle via interaction with regulatory proteins in the nucleus. Plays an important role in osteoclastic bone resorption in conjunction with PTK2B/PYK2. Both the formation of a SRC-PTK2B/PYK2 complex and SRC kinase activity are necessary for this function. Recruited to activated integrins by PTK2B/PYK2, thereby phosphorylating CBL, which in turn induces the activation and recruitment of phosphatidylinositol 3-kinase to the cell membrane in a signaling pathway that is critical for osteoclast function. Promotes energy production in osteoclasts by activating mitochondrial cytochrome C oxidase. Phosphorylates DDR2 on tyrosine residues, thereby promoting its subsequent autophosphorylation. Phosphorylates RUNX3 and COX2 on tyrosine residues, TNK2 on 'Tyr-284' and CBL on 'Tyr-731'. Enhances RIGI-elicited antiviral signaling. Phosphorylates PDPK1 at 'Tyr-9', 'Tyr-373' and 'Tyr-376'. Phosphorylates BCAR1 at 'Tyr-128'. Phosphorylates CBLC at multiple tyrosine residues, phosphorylation at 'Tyr-341' activates CBLC E3 activity. Phosphorylates synaptic vesicle protein synaptophysin (SYP). Involved in anchorage-independent cell growth. Required for podosome formation. Mediates IL6 signaling by activating YAP1-NOTCH pathway to induce inflammation-induced epithelial regeneration. Phosphorylates OTUB1, promoting deubiquitination of RPTOR. Phosphorylates caspase CASP8 at 'Tyr-380' which negatively regulates CASP8 processing and activation, down-regulating CASP8 proapoptotic function. Non-receptor protein tyrosine kinase which phosphorylates synaptophysin with high affinity. In terms of biological role, non-receptor protein tyrosine kinase which shows higher basal kinase activity than isoform 1, possibly due to weakened intramolecular interactions which enhance autophosphorylation of Tyr-419 and subsequent activation. The SH3 domain shows reduced affinity with the linker sequence between the SH2 and kinase domains which may account for the increased basal activity. Displays altered substrate specificity compared to isoform 1, showing weak affinity for synaptophysin and for peptide substrates containing class I or class II SH3 domain-binding motifs. Plays a role in L1CAM-mediated neurite elongation, possibly by acting downstream of L1CAM to drive cytoskeletal rearrangements involved in neurite outgrowth. Functionally, non-receptor protein tyrosine kinase which shows higher basal kinase activity than isoform 1, possibly due to weakened intramolecular interactions which enhance autophosphorylation of Tyr-419 and subsequent activation. The SH3 domain shows reduced affinity with the linker sequence between the SH2 and kinase domains which may account for the increased basal activity. Displays altered substrate specificity compared to isoform 1, showing weak affinity for synaptophysin and for peptide substrates containing class I or class II SH3 domain-binding motifs. Plays a role in neurite elongation. The chain is Proto-oncogene tyrosine-protein kinase Src from Homo sapiens (Human).